Reading from the N-terminus, the 262-residue chain is Flap endonuclease Xni (262 aa).

Position 105 (D105) interacts with Mg(2+). Residues 162–257 (ERSQFLDLMA…FRVIDSPPEK (96 aa)) form the 5'-3' exonuclease domain. 5 residues coordinate K(+): L172, A173, P181, I183, and I186. The interaction with DNA stretch occupies residues 185-190 (GIGPKS).

The protein belongs to the Xni family. Mg(2+) serves as cofactor. It depends on K(+) as a cofactor.

Its function is as follows. Has flap endonuclease activity. During DNA replication, flap endonucleases cleave the 5'-overhanging flap structure that is generated by displacement synthesis when DNA polymerase encounters the 5'-end of a downstream Okazaki fragment. This Shewanella baltica (strain OS155 / ATCC BAA-1091) protein is Flap endonuclease Xni.